Here is a 168-residue protein sequence, read N- to C-terminus: Photosystem I assembly protein Ycf3 (168 aa).

TPR repeat units lie at residues 35–68, 72–105, and 120–153; these read AFTY…EIDP, SYIL…NPFL, and GEQA…TPGN.

It belongs to the Ycf3 family.

The protein localises to the plastid. Its subcellular location is the chloroplast thylakoid membrane. Essential for the assembly of the photosystem I (PSI) complex. May act as a chaperone-like factor to guide the assembly of the PSI subunits. This chain is Photosystem I assembly protein Ycf3, found in Liriodendron tulipifera (Tuliptree).